The following is a 338-amino-acid chain: Queuosine 5'-phosphate N-glycosylase/hydrolase (338 aa).

An N-acetylmethionine modification is found at Met1. Residues His51, Phe235, Asp237, Asp311, Tyr312, and Asp316 each coordinate queuine. Asp237 acts as the Nucleophile or transition state stabilizer in catalysis.

Belongs to the QNG1 protein family. As to expression, highly expressed in liver.

The catalysed reaction is queuosine 5'-phosphate + H2O = queuine + D-ribose 5-phosphate. Functionally, catalyzes the hydrolysis of queuosine 5'-phosphate, releasing the nucleobase queuine (q). Is required for salvage of queuine from exogenous queuosine (Q) that is imported and then converted to queuosine 5'-phosphate intracellularly. This is Queuosine 5'-phosphate N-glycosylase/hydrolase from Mus musculus (Mouse).